Here is a 361-residue protein sequence, read N- to C-terminus: MKDSIKAKLQSLIERHEEVSALLSEAGIISDQNKFRDLSKEYSHLEPIVKAFKEYTQALEDKQAAYEMLNEKDAELVEMAKEELKLANEAIEKLESELQIFLLPRDPNDDANVFLEIRAGTGGDEASIFSGDLFKMYSKYAEQRGWKIEVISASEGEHGGYKEIISRIYGDGVYSQLKFESGAHRVQRVPATESQGRIHTSACTVAVMPEADEVEGIDINPADIKVDTFRASGAGGQHVNKTDSAIRITHIPTGVVVECQDQRSQHKNRAAAMSMLKSKLLQAEIDKQQKEQSDTRKSLVGSGDRSERIRTYNYPQGRVTDHRINLTLYKLDEVMEGSLDSIIQPLVLEHQADLLATMSDE.

Gln-237 carries the post-translational modification N5-methylglutamine. Residues 287–297 show a composition bias toward basic and acidic residues; it reads KQQKEQSDTRK. A disordered region spans residues 287-313; the sequence is KQQKEQSDTRKSLVGSGDRSERIRTYN.

This sequence belongs to the prokaryotic/mitochondrial release factor family. In terms of processing, methylated by PrmC. Methylation increases the termination efficiency of RF1.

It is found in the cytoplasm. Peptide chain release factor 1 directs the termination of translation in response to the peptide chain termination codons UAG and UAA. In Francisella tularensis subsp. holarctica (strain FTNF002-00 / FTA), this protein is Peptide chain release factor 1.